Here is a 393-residue protein sequence, read N- to C-terminus: Glucose-1-phosphate adenylyltransferase (393 aa).

Residues Y105, G170, 185–186, and S196 contribute to the alpha-D-glucose 1-phosphate site; that span reads EK.

Belongs to the bacterial/plant glucose-1-phosphate adenylyltransferase family. As to quaternary structure, homotetramer.

The catalysed reaction is alpha-D-glucose 1-phosphate + ATP + H(+) = ADP-alpha-D-glucose + diphosphate. It functions in the pathway glycan biosynthesis; glycogen biosynthesis. Its function is as follows. Involved in the biosynthesis of ADP-glucose, a building block required for the elongation reactions to produce glycogen. Catalyzes the reaction between ATP and alpha-D-glucose 1-phosphate (G1P) to produce pyrophosphate and ADP-Glc. This chain is Glucose-1-phosphate adenylyltransferase, found in Clostridium perfringens (strain 13 / Type A).